Consider the following 454-residue polypeptide: Ribosomal protein uS12 methylthiotransferase RimO (454 aa).

Positions 14–125 (SKVAFSHVGC…IAKVLDRVEK (112 aa)) constitute an MTTase N-terminal domain. Residues C23, C59, C88, C163, C167, and C170 each coordinate [4Fe-4S] cluster. In terms of domain architecture, Radical SAM core spans 149–378 (DKNKFVAYLR…ISVQQNISKD (230 aa)). A TRAM domain is found at 381–452 (QSYVGSKMKI…EYDLYGETLK (72 aa)).

The protein belongs to the methylthiotransferase family. RimO subfamily. [4Fe-4S] cluster is required as a cofactor.

Its subcellular location is the cytoplasm. The enzyme catalyses L-aspartate(89)-[ribosomal protein uS12]-hydrogen + (sulfur carrier)-SH + AH2 + 2 S-adenosyl-L-methionine = 3-methylsulfanyl-L-aspartate(89)-[ribosomal protein uS12]-hydrogen + (sulfur carrier)-H + 5'-deoxyadenosine + L-methionine + A + S-adenosyl-L-homocysteine + 2 H(+). Catalyzes the methylthiolation of an aspartic acid residue of ribosomal protein uS12. The protein is Ribosomal protein uS12 methylthiotransferase RimO of Prochlorococcus marinus (strain MIT 9215).